The sequence spans 347 residues: UDP-3-O-acylglucosamine N-acyltransferase (347 aa).

His-245 functions as the Proton acceptor in the catalytic mechanism.

Belongs to the transferase hexapeptide repeat family. LpxD subfamily. In terms of assembly, homotrimer.

The enzyme catalyses a UDP-3-O-[(3R)-3-hydroxyacyl]-alpha-D-glucosamine + a (3R)-hydroxyacyl-[ACP] = a UDP-2-N,3-O-bis[(3R)-3-hydroxyacyl]-alpha-D-glucosamine + holo-[ACP] + H(+). The protein operates within bacterial outer membrane biogenesis; LPS lipid A biosynthesis. In terms of biological role, catalyzes the N-acylation of UDP-3-O-acylglucosamine using 3-hydroxyacyl-ACP as the acyl donor. Is involved in the biosynthesis of lipid A, a phosphorylated glycolipid that anchors the lipopolysaccharide to the outer membrane of the cell. The polypeptide is UDP-3-O-acylglucosamine N-acyltransferase (Chromohalobacter salexigens (strain ATCC BAA-138 / DSM 3043 / CIP 106854 / NCIMB 13768 / 1H11)).